The sequence spans 274 residues: MAVIKMKPTSPGQRGAVKISRDHLFKGAPHAPLLEPQFQKAGRNNNGHITIRHRGGGAKHHYRVVDFVRNKDGIPAKVERIEYDPNRTAHIALVCYADGERRYIIAPRGLEAGATLLSGSEAPIRAGNTLPIRNIPVGSTIHCIELQPGKGAQIARSAGTSATLLAREGVYAQVRMRSGEVRRIHIECRATIGEVANEEHSLRQLGKAGVKRHMGIRPTVRGVVMNPVDHPHGGGEGKTGEGRHPVDPWGNLTKGYRTRNNKRTQVFIVSRRKK.

A disordered region spans residues 223–256 (VVMNPVDHPHGGGEGKTGEGRHPVDPWGNLTKGY). Residues 229 to 246 (DHPHGGGEGKTGEGRHPV) are compositionally biased toward basic and acidic residues.

It belongs to the universal ribosomal protein uL2 family. In terms of assembly, part of the 50S ribosomal subunit. Forms a bridge to the 30S subunit in the 70S ribosome.

Its function is as follows. One of the primary rRNA binding proteins. Required for association of the 30S and 50S subunits to form the 70S ribosome, for tRNA binding and peptide bond formation. It has been suggested to have peptidyltransferase activity; this is somewhat controversial. Makes several contacts with the 16S rRNA in the 70S ribosome. This chain is Large ribosomal subunit protein uL2, found in Variovorax paradoxus (strain S110).